Consider the following 539-residue polypeptide: Glucans biosynthesis protein D (539 aa).

A signal peptide (tat-type signal) is located at residues 1-31 (MHRRNLLKASMALAAYTGLSASGLLAARAWA).

This sequence belongs to the OpgD/OpgG family. In terms of processing, predicted to be exported by the Tat system. The position of the signal peptide cleavage has not been experimentally proven.

The protein resides in the periplasm. The protein operates within glycan metabolism; osmoregulated periplasmic glucan (OPG) biosynthesis. Its function is as follows. Probably involved in the control of the structural glucose backbone of osmoregulated periplasmic glucans (OPGs). The polypeptide is Glucans biosynthesis protein D (Pseudomonas fluorescens (strain ATCC BAA-477 / NRRL B-23932 / Pf-5)).